Here is a 285-residue protein sequence, read N- to C-terminus: Probable endonuclease 4 (285 aa).

Zn(2+) contacts are provided by His69, His109, Glu145, Asp179, His182, His216, Asp229, His231, and Glu261.

This sequence belongs to the AP endonuclease 2 family. Requires Zn(2+) as cofactor.

It carries out the reaction Endonucleolytic cleavage to 5'-phosphooligonucleotide end-products.. Its function is as follows. Endonuclease IV plays a role in DNA repair. It cleaves phosphodiester bonds at apurinic or apyrimidinic (AP) sites, generating a 3'-hydroxyl group and a 5'-terminal sugar phosphate. The chain is Probable endonuclease 4 from Salmonella paratyphi A (strain AKU_12601).